The chain runs to 938 residues: Probable glutamyl endopeptidase, chloroplastic (938 aa).

The N-terminal 54 residues, 1–54, are a transit peptide targeting the chloroplast; it reads MSSLTILLQRACLRFALLPVPPLRAPLRPPRRPLGLPRRSAMSSSAASRLSHIV. The span at 58–76 shows a compositional bias: low complexity; that stretch reads GGAAGESSEPPAAAAAASG. A disordered region spans residues 58–77; the sequence is GGAAGESSEPPAAAAAASGL. Residues Ser762, Asp836, and His870 each act as charge relay system in the active site. Residues 897 to 913 are compositionally biased toward polar residues; that stretch reads SSKTDSDSVADTENKTV. Residues 897 to 938 form a disordered region; that stretch reads SSKTDSDSVADTENKTVSASGGGAPCEGPEAEGFSSMQRSLL.

Belongs to the peptidase S9D family.

It is found in the plastid. The protein localises to the chloroplast stroma. Its function is as follows. Serine-type protease active in vitro against the LHCII N-terminal. Cleaves its substrate on the carboxy-side of Glu residues. The protein is Probable glutamyl endopeptidase, chloroplastic (GEP) of Oryza sativa subsp. japonica (Rice).